Here is a 571-residue protein sequence, read N- to C-terminus: Proline--tRNA ligase 1 (571 aa).

It belongs to the class-II aminoacyl-tRNA synthetase family. ProS type 1 subfamily. In terms of assembly, homodimer.

Its subcellular location is the cytoplasm. It carries out the reaction tRNA(Pro) + L-proline + ATP = L-prolyl-tRNA(Pro) + AMP + diphosphate. In terms of biological role, catalyzes the attachment of proline to tRNA(Pro) in a two-step reaction: proline is first activated by ATP to form Pro-AMP and then transferred to the acceptor end of tRNA(Pro). As ProRS can inadvertently accommodate and process non-cognate amino acids such as alanine and cysteine, to avoid such errors it has two additional distinct editing activities against alanine. One activity is designated as 'pretransfer' editing and involves the tRNA(Pro)-independent hydrolysis of activated Ala-AMP. The other activity is designated 'posttransfer' editing and involves deacylation of mischarged Ala-tRNA(Pro). The misacylated Cys-tRNA(Pro) is not edited by ProRS. This Clostridioides difficile (strain 630) (Peptoclostridium difficile) protein is Proline--tRNA ligase 1.